A 258-amino-acid polypeptide reads, in one-letter code: Synapse differentiation-inducing gene protein 1 (258 aa).

The Cytoplasmic portion of the chain corresponds to Met-1–His-181. Ser-137 bears the Phosphoserine mark. Residues Leu-182–Tyr-202 form a helical membrane-spanning segment. The Extracellular portion of the chain corresponds to Leu-203–Phe-228. Residues Leu-229–Ile-249 constitute an intramembrane region (helical). The Extracellular segment spans residues Ala-250–Leu-258.

This sequence belongs to the CD225/Dispanin family. Homodimer. Interacts with GRIA1 and GRIA2. As to expression, brain-specific. Expressed in Purkinje neurons in cerebellum. Also detected in the hippocampus. Found at excitatory synapses and postsynaptic cells.

The protein localises to the cell membrane. The protein resides in the early endosome membrane. It is found in the postsynaptic density membrane. Its subcellular location is the synapse. It localises to the cell projection. The protein localises to the dendrite. The protein resides in the dendritic spine. Its function is as follows. May regulate AMPA receptor content at nascent synapses, and have a role in postsynaptic development and maturation. This Mus musculus (Mouse) protein is Synapse differentiation-inducing gene protein 1 (Syndig1).